Here is a 283-residue protein sequence, read N- to C-terminus: 2-dehydro-3-deoxyphosphooctonate aldolase (283 aa).

This sequence belongs to the KdsA family.

Its subcellular location is the cytoplasm. The catalysed reaction is D-arabinose 5-phosphate + phosphoenolpyruvate + H2O = 3-deoxy-alpha-D-manno-2-octulosonate-8-phosphate + phosphate. It functions in the pathway carbohydrate biosynthesis; 3-deoxy-D-manno-octulosonate biosynthesis; 3-deoxy-D-manno-octulosonate from D-ribulose 5-phosphate: step 2/3. The protein operates within bacterial outer membrane biogenesis; lipopolysaccharide biosynthesis. The polypeptide is 2-dehydro-3-deoxyphosphooctonate aldolase (Vibrio cholerae serotype O1 (strain ATCC 39315 / El Tor Inaba N16961)).